The following is a 281-amino-acid chain: 3'-5' exonuclease Snipper (281 aa).

Residues 19–52 (DGARPDPNNDPEESFNEDEVTEANSVPAKSKKSR) are disordered. Residues 27–39 (NDPEESFNEDEVT) are compositionally biased toward acidic residues. The region spanning 64–262 (YVIAVDFEAT…MCKMVRDGAL (199 aa)) is the Exonuclease domain. Mg(2+) contacts are provided by D69 and E71. Residue E71 is the Proton acceptor of the active site. The AMP site is built by E71 and A72. D183 contributes to the Mg(2+) binding site. The Proton acceptor role is filled by H240. AMP is bound at residue H240. D245 lines the Mg(2+) pocket.

This sequence belongs to the ERI2 family. Mg(2+) serves as cofactor.

It is found in the cytoplasm. Its subcellular location is the nucleus. It localises to the nucleolus. In terms of biological role, a broad-specificity exonuclease, capable of degrading both structure-specific DNA and RNA targets without sequence specificity in vitro. Requires two to five unpaired nucleotides in the 3' region for efficient binding and nuclease activity. Binds with higher affinity to RNA and DNA stem-loop substrates compared to single-stranded substrate. Binds to the 3'-end of histone mRNAs and degrades them, suggesting that it might play a role in histone mRNA decay after replication. Can readily cleave the histone stem-loop RNA beyond the -12 (UUU) position in the loop to produce -14 and then -16 oligonucleotide fragments for both the stem-loop and the reverse stem-loop. Cleaves both the single-stranded 3' flank as well as the double-stranded stem portion of histone stem-loop RNA. Might affect histone mRNA 3' processing thereby regulating histone protein expression. Has an important role in development and tissue formation. Might have a role in 5.8S rRNA precursor processing. The chain is 3'-5' exonuclease Snipper from Drosophila melanogaster (Fruit fly).